The sequence spans 149 residues: Transcriptional repressor NrdR (149 aa).

A zinc finger spans residues 3 to 34 (CPFCSAVDTKVIDSRLVGEGTQVRRRRQCVIC). Residues 49–139 (PRVIKSNDVR…VYRSFEDIRE (91 aa)) form the ATP-cone domain.

Belongs to the NrdR family. It depends on Zn(2+) as a cofactor.

Its function is as follows. Negatively regulates transcription of bacterial ribonucleotide reductase nrd genes and operons by binding to NrdR-boxes. This chain is Transcriptional repressor NrdR, found in Sodalis glossinidius (strain morsitans).